We begin with the raw amino-acid sequence, 295 residues long: MTTITDLYPSRGAAEVSVPRQDPVLWGTPDTPGPITAADLQSYEHDGFLAVPQLIGDDEVALYHAELERLIHDPAVRADERSIVEPQSQEIRSVFEVHKISEIFAQLVRDERVVGRARQILGSDVYVHQSRINVKPGFGASGFYWHSDFETWHAEDGLPNMRTVSVSIALTENYDTNGGLMIMPGSHKTFLGCAGATPKDNYKKSLQMQDAGTPSDEALTKFADRHGIRLFTGRAGSATWFDCNCLHGSGDNITPFPRSNVFIVFNSVENTAVEPFSAPVRRPEFIGARDFTPVR.

Glutamine 129 is a binding site for L-ectoine. Lysine 135 contributes to the 2-oxoglutarate binding site. Residues histidine 146, aspartate 148, and histidine 247 each coordinate Fe cation.

This sequence belongs to the PhyH family. EctD subfamily. As to quaternary structure, homodimer. Fe(2+) serves as cofactor.

The catalysed reaction is L-ectoine + 2-oxoglutarate + O2 = 5-hydroxyectoine + succinate + CO2. Functionally, involved in the biosynthesis of 5-hydroxyectoine, called compatible solute, which helps organisms to survive extreme osmotic stress by acting as a highly soluble organic osmolyte. Catalyzes the 2-oxoglutarate-dependent selective hydroxylation of L-ectoine to yield (4S,5S)-5-hydroxyectoine. This Streptomyces avermitilis (strain ATCC 31267 / DSM 46492 / JCM 5070 / NBRC 14893 / NCIMB 12804 / NRRL 8165 / MA-4680) protein is Ectoine dioxygenase.